An 89-amino-acid chain; its full sequence is Cell division topological specificity factor (89 aa).

It belongs to the MinE family.

In terms of biological role, prevents the cell division inhibition by proteins MinC and MinD at internal division sites while permitting inhibition at polar sites. This ensures cell division at the proper site by restricting the formation of a division septum at the midpoint of the long axis of the cell. This is Cell division topological specificity factor from Janthinobacterium sp. (strain Marseille) (Minibacterium massiliensis).